Reading from the N-terminus, the 1235-residue chain is DNA polymerase catalytic subunit (1235 aa).

2 disordered regions span residues 640–691 (QGRF…ETAG) and 1098–1134 (AAAP…ASKP). Residues 650 to 661 (APKRPAAAREDE) are compositionally biased toward basic and acidic residues. Acidic residues predominate over residues 662–675 (ERPEEEGEDEDERE). Positions 676 to 691 (EGGGEREPDGARETAG) are enriched in basic and acidic residues.

This sequence belongs to the DNA polymerase type-B family. Forms a complex with the ssDNA-binding protein UL29, the DNA polymerase processivity factor, and the alkaline exonuclease. Interacts with the putative helicase-primase complex subunit UL8; this interaction may coordinate leading and lagging strand DNA synthesis at the replication fork.

The protein resides in the host nucleus. It carries out the reaction DNA(n) + a 2'-deoxyribonucleoside 5'-triphosphate = DNA(n+1) + diphosphate. It catalyses the reaction Endonucleolytic cleavage to 5'-phosphomonoester.. In terms of biological role, replicates viral genomic DNA. The replication complex is composed of six viral proteins: the DNA polymerase, processivity factor, primase, primase-associated factor, helicase, and ssDNA-binding protein. Additionally, the polymerase contains an intrinsic ribonuclease H (RNase H) activity that specifically degrades RNA/DNA heteroduplexes or duplex DNA substrates in the 5' to 3' direction. Therefore, it can catalyze the excision of the RNA primers that initiate the synthesis of Okazaki fragments at a replication fork during viral DNA replication. In Homo sapiens (Human), this protein is DNA polymerase catalytic subunit.